We begin with the raw amino-acid sequence, 285 residues long: Bifunctional protein FolD (285 aa).

Residues Gly165–Ser167 and Ser190 each bind NADP(+).

This sequence belongs to the tetrahydrofolate dehydrogenase/cyclohydrolase family. In terms of assembly, homodimer.

The catalysed reaction is (6R)-5,10-methylene-5,6,7,8-tetrahydrofolate + NADP(+) = (6R)-5,10-methenyltetrahydrofolate + NADPH. The enzyme catalyses (6R)-5,10-methenyltetrahydrofolate + H2O = (6R)-10-formyltetrahydrofolate + H(+). Its pathway is one-carbon metabolism; tetrahydrofolate interconversion. Catalyzes the oxidation of 5,10-methylenetetrahydrofolate to 5,10-methenyltetrahydrofolate and then the hydrolysis of 5,10-methenyltetrahydrofolate to 10-formyltetrahydrofolate. The chain is Bifunctional protein FolD from Burkholderia cenocepacia (strain HI2424).